A 290-amino-acid chain; its full sequence is MLKTVHQKAGRHTRPVRAWLKLLWQRIDEDNMTTLAGNLAYVSLLSLVPLIAVVFALFAAFPMFSDVSIQLRHFIFANFMPATGDVIQRYIEQFVANSNKMTAVGACGLIVTALLLMYAIDSALNTIWRSKRTRPKVYSFAVYWMILTLGPLLAGASLAISSYLLSLRWASDLNTVIDNVLRILPLLLSWISFWLLYSIVPTTRVPNRDALVGAFVAALLFESGKKGFALYITMFPSYQLIYGVLAVIPILFVWVYWTWCIVLLGAEITVTLGEYRKLKQAAEQEEADQP.

A run of 6 helical transmembrane segments spans residues 44–64 (LLSLVPLIAVVFALFAAFPMF), 104–124 (VGACGLIVTALLLMYAIDSAL), 140–160 (FAVYWMILTLGPLLAGASLAI), 183–203 (ILPLLLSWISFWLLYSIVPTT), 210–230 (ALVGAFVAALLFESGKKGFAL), and 244–264 (VLAVIPILFVWVYWTWCIVLL).

It belongs to the UPF0761 family.

It localises to the cell inner membrane. This chain is UPF0761 membrane protein YihY, found in Salmonella paratyphi B (strain ATCC BAA-1250 / SPB7).